Here is a 302-residue protein sequence, read N- to C-terminus: Glycine N-acyltransferase-like protein 1 (302 aa).

The protein belongs to the glycine N-acyltransferase family. In terms of tissue distribution, expressed in liver and kidney and, at lower levels, in pancreas, testis, ovary and stomach.

It catalyses the reaction an acyl-CoA + L-glutamine = an N(2)-acyl-L-glutamine + CoA + H(+). Acyltransferase which transfers an acyl group to the N-terminus of glutamine. Can use phenylacetyl-CoA as an acyl donor. In Homo sapiens (Human), this protein is Glycine N-acyltransferase-like protein 1.